Reading from the N-terminus, the 291-residue chain is 4-diphosphocytidyl-2-C-methyl-D-erythritol kinase (291 aa).

Residue Lys-8 is part of the active site. 89-99 (PIGAGVGGGSS) is an ATP binding site. Asp-131 is an active-site residue.

The protein belongs to the GHMP kinase family. IspE subfamily.

The enzyme catalyses 4-CDP-2-C-methyl-D-erythritol + ATP = 4-CDP-2-C-methyl-D-erythritol 2-phosphate + ADP + H(+). The protein operates within isoprenoid biosynthesis; isopentenyl diphosphate biosynthesis via DXP pathway; isopentenyl diphosphate from 1-deoxy-D-xylulose 5-phosphate: step 3/6. In terms of biological role, catalyzes the phosphorylation of the position 2 hydroxy group of 4-diphosphocytidyl-2C-methyl-D-erythritol. The protein is 4-diphosphocytidyl-2-C-methyl-D-erythritol kinase of Chlamydia caviae (strain ATCC VR-813 / DSM 19441 / 03DC25 / GPIC) (Chlamydophila caviae).